A 601-amino-acid chain; its full sequence is Proline--tRNA ligase (601 aa).

This sequence belongs to the class-II aminoacyl-tRNA synthetase family. ProS type 1 subfamily. As to quaternary structure, homodimer.

The protein resides in the cytoplasm. It carries out the reaction tRNA(Pro) + L-proline + ATP = L-prolyl-tRNA(Pro) + AMP + diphosphate. Its function is as follows. Catalyzes the attachment of proline to tRNA(Pro) in a two-step reaction: proline is first activated by ATP to form Pro-AMP and then transferred to the acceptor end of tRNA(Pro). As ProRS can inadvertently accommodate and process non-cognate amino acids such as alanine and cysteine, to avoid such errors it has two additional distinct editing activities against alanine. One activity is designated as 'pretransfer' editing and involves the tRNA(Pro)-independent hydrolysis of activated Ala-AMP. The other activity is designated 'posttransfer' editing and involves deacylation of mischarged Ala-tRNA(Pro). The misacylated Cys-tRNA(Pro) is not edited by ProRS. This is Proline--tRNA ligase from Picosynechococcus sp. (strain ATCC 27264 / PCC 7002 / PR-6) (Agmenellum quadruplicatum).